A 522-amino-acid polypeptide reads, in one-letter code: Stellatic acid synthase (522 aa).

Residues 23 to 43 (IYGIYEPLLALFAVYSVAVVV) traverse the membrane as a helical segment. 2 N-linked (GlcNAc...) asparagine glycosylation sites follow: Asn267 and Asn451. Cys464 is a binding site for heme. N-linked (GlcNAc...) asparagine glycosylation occurs at Asn495.

The protein belongs to the cytochrome P450 family. Requires heme as cofactor.

Its subcellular location is the membrane. It catalyses the reaction stellata-2,6,19-triene + 3 reduced [NADPH--hemoprotein reductase] + 3 O2 = stellatate + 3 oxidized [NADPH--hemoprotein reductase] + 4 H2O + 4 H(+). Its pathway is secondary metabolite biosynthesis; terpenoid biosynthesis. Cytochrome P450 monooxygenase; part of the gene cluster that mediates the biosynthesis of the sesterterpene stellatic acid. The first step in the pathway is performed by the stellatatriene synthase that possesses both prenyl transferase and terpene cyclase activity, converting isopentenyl diphosphate and dimethylallyl diphosphate into geranylgeranyl diphosphate (GGDP) and then converting GGDP into stellata-2,6,19-triene. The cytochrome P450 monooxygenase Stl-P450 then catalyzes three successive oxidation reactions on the C-20 methyl group to generate the carboxylic acid of stellatic acid. This is Stellatic acid synthase from Emericella variicolor (Aspergillus stellatus).